The sequence spans 55 residues: ATP synthase protein 8 (55 aa).

The chain crosses the membrane as a helical span at residues 7–24; that stretch reads NPWLFIMLMSWLTFSLII. Residues 35–55 are disordered; sequence NPPSNKTPTTTKTSPWTWPWT. The segment covering 37 to 55 has biased composition (low complexity); sequence PSNKTPTTTKTSPWTWPWT.

Belongs to the ATPase protein 8 family. In terms of assembly, F-type ATPases have 2 components, CF(1) - the catalytic core - and CF(0) - the membrane proton channel.

The protein localises to the mitochondrion membrane. Its function is as follows. Mitochondrial membrane ATP synthase (F(1)F(0) ATP synthase or Complex V) produces ATP from ADP in the presence of a proton gradient across the membrane which is generated by electron transport complexes of the respiratory chain. F-type ATPases consist of two structural domains, F(1) - containing the extramembraneous catalytic core and F(0) - containing the membrane proton channel, linked together by a central stalk and a peripheral stalk. During catalysis, ATP synthesis in the catalytic domain of F(1) is coupled via a rotary mechanism of the central stalk subunits to proton translocation. Part of the complex F(0) domain. Minor subunit located with subunit a in the membrane. The sequence is that of ATP synthase protein 8 (MT-ATP8) from Corythaeola cristata (Great blue turaco).